The sequence spans 653 residues: Sulfate transporter 1.2 (653 aa).

The disordered stretch occupies residues 1 to 30 (MSSRAHPVDGSPATDGGHVPMKPSPTRHKV). Residues 1–91 (MSSRAHPVDG…GRNYTFKKFR (91 aa)) lie on the Cytoplasmic side of the membrane. The helical transmembrane segment at 92–112 (GDLISGLTIASLCIPQDIGYA) threads the bilayer. Residues 113 to 116 (KLAN) lie on the Extracellular side of the membrane. Residues 117-137 (LDPKYGLYSSFVPPLVYACMG) traverse the membrane as a helical segment. Residues 138-141 (SSRD) lie on the Cytoplasmic side of the membrane. The chain crosses the membrane as a helical span at residues 142–162 (IAIGPVAVVSLLLGTLLRAEI). The Extracellular portion of the chain corresponds to 163-173 (DPNTSPDEYLR). A run of 2 helical transmembrane segments spans residues 174–194 (LAFT…FFRL) and 195–215 (GFLI…GAAI). The Extracellular portion of the chain corresponds to 216-253 (TIALQQLKGFLGIKKFTKKTDIISVLESVFKAAHHGWN). A helical transmembrane segment spans residues 254-274 (WQTILIGASFLTFLLTSKIIG). The Cytoplasmic portion of the chain corresponds to 275–280 (KKSKKL). Residues 281 to 301 (FWVPAIAPLISVIVSTFFVYI) traverse the membrane as a helical segment. Residues 302-339 (TRADKQGVQIVKHLDQGINPSSFHLIYFTGDNLAKGIR) are Extracellular-facing. The chain crosses the membrane as a helical span at residues 340-360 (IGVVAGMVALTEAVAIGRTFA). The Cytoplasmic segment spans residues 361-372 (AMKDYQIDGNKE). The chain crosses the membrane as a helical span at residues 373–393 (MVALGMMNVVGSMSSCYVATG). Residues 394–409 (SFSRSAVNFMAGCQTA) are Extracellular-facing. Residues 410 to 430 (VSNIIMSIVVLLTLLFLTPLF) traverse the membrane as a helical segment. Over 431–438 (KYTPNAIL) the chain is Cytoplasmic. Residues 439–459 (AAIIINAVIPLIDIQAAILIF) form a helical membrane-spanning segment. Topologically, residues 460–466 (KVDKLDF) are extracellular. The chain crosses the membrane as a helical span at residues 467–487 (IACIGAFFGVIFVSVEIGLLI). Over 488–653 (AVSISFAKIL…ACCPKLSNEV (166 aa)) the chain is Cytoplasmic. The region spanning 522 to 645 (QYPEATMVPG…LTVADAVEAC (124 aa)) is the STAS domain.

Belongs to the SLC26A/SulP transporter (TC 2.A.53.1) family. As to quaternary structure, homodimer. Interacts with OASA1 through its STAS domain. As to expression, expressed in lateral root cap, root hairs, epidermal and cortical cells of roots.

It is found in the cell membrane. Interaction with OASA1 negatively impacts the transporter activity. In terms of biological role, high-affinity H(+)/sulfate cotransporter that mediates the uptake of the environmental sulfate by plant roots. Plays a central role in the regulation of sulfate assimilation. Unable to transport molybdate. In Arabidopsis thaliana (Mouse-ear cress), this protein is Sulfate transporter 1.2 (SULTR1;2).